A 299-amino-acid chain; its full sequence is Phosphatidylserine decarboxylase proenzyme (299 aa).

Catalysis depends on charge relay system; for autoendoproteolytic cleavage activity residues Asp-115, His-171, and Ser-258. Residue Ser-258 is the Schiff-base intermediate with substrate; via pyruvic acid; for decarboxylase activity of the active site. Residue Ser-258 is modified to Pyruvic acid (Ser); by autocatalysis.

This sequence belongs to the phosphatidylserine decarboxylase family. PSD-B subfamily. Prokaryotic type II sub-subfamily. As to quaternary structure, heterodimer of a large membrane-associated beta subunit and a small pyruvoyl-containing alpha subunit. Pyruvate is required as a cofactor. Post-translationally, is synthesized initially as an inactive proenzyme. Formation of the active enzyme involves a self-maturation process in which the active site pyruvoyl group is generated from an internal serine residue via an autocatalytic post-translational modification. Two non-identical subunits are generated from the proenzyme in this reaction, and the pyruvate is formed at the N-terminus of the alpha chain, which is derived from the carboxyl end of the proenzyme. The autoendoproteolytic cleavage occurs by a canonical serine protease mechanism, in which the side chain hydroxyl group of the serine supplies its oxygen atom to form the C-terminus of the beta chain, while the remainder of the serine residue undergoes an oxidative deamination to produce ammonia and the pyruvoyl prosthetic group on the alpha chain. During this reaction, the Ser that is part of the protease active site of the proenzyme becomes the pyruvoyl prosthetic group, which constitutes an essential element of the active site of the mature decarboxylase.

The protein resides in the cell membrane. It catalyses the reaction a 1,2-diacyl-sn-glycero-3-phospho-L-serine + H(+) = a 1,2-diacyl-sn-glycero-3-phosphoethanolamine + CO2. Its pathway is phospholipid metabolism; phosphatidylethanolamine biosynthesis; phosphatidylethanolamine from CDP-diacylglycerol: step 2/2. Its function is as follows. Catalyzes the formation of phosphatidylethanolamine (PtdEtn) from phosphatidylserine (PtdSer). The chain is Phosphatidylserine decarboxylase proenzyme from Chlamydia caviae (strain ATCC VR-813 / DSM 19441 / 03DC25 / GPIC) (Chlamydophila caviae).